We begin with the raw amino-acid sequence, 122 residues long: Small ribosomal subunit protein uS13 (122 aa).

The disordered stretch occupies residues 95 to 122; the sequence is GLPVRGQRTHTNARTRKGPAKPIAGKKK.

Belongs to the universal ribosomal protein uS13 family. In terms of assembly, part of the 30S ribosomal subunit. Forms a loose heterodimer with protein S19. Forms two bridges to the 50S subunit in the 70S ribosome.

Its function is as follows. Located at the top of the head of the 30S subunit, it contacts several helices of the 16S rRNA. In the 70S ribosome it contacts the 23S rRNA (bridge B1a) and protein L5 of the 50S subunit (bridge B1b), connecting the 2 subunits; these bridges are implicated in subunit movement. Contacts the tRNAs in the A and P-sites. The polypeptide is Small ribosomal subunit protein uS13 (Xanthobacter autotrophicus (strain ATCC BAA-1158 / Py2)).